The following is a 164-amino-acid chain: Cytochrome c-type biogenesis protein CcmE (164 aa).

The Cytoplasmic portion of the chain corresponds to 1 to 8; it reads MNPRRKKR. The chain crosses the membrane as a helical; Signal-anchor for type II membrane protein span at residues 9–29; the sequence is LTLAVALIGGVAAIASLLLYA. Residues 30-164 lie on the Periplasmic side of the membrane; sequence LNSNLNLFFT…EDQSKAGGYK (135 aa). Residues H131 and Y135 each contribute to the heme site. The disordered stretch occupies residues 140–164; the sequence is VAEAMGQSHEKLDYSEDQSKAGGYK. The segment covering 147–158 has biased composition (basic and acidic residues); sequence SHEKLDYSEDQS.

Belongs to the CcmE/CycJ family.

The protein localises to the cell inner membrane. Heme chaperone required for the biogenesis of c-type cytochromes. Transiently binds heme delivered by CcmC and transfers the heme to apo-cytochromes in a process facilitated by CcmF and CcmH. The chain is Cytochrome c-type biogenesis protein CcmE from Shewanella piezotolerans (strain WP3 / JCM 13877).